The primary structure comprises 248 residues: MSGRKFFVGGNWKMNGDKKSIEELANTLNSAKLNPDTEVVCGAPTIYLDYARSKLDPNIDVAAQNCYKVAKGAFTGEISPAMIKDCGVKWVILGHSERRHVFGESDELIGQKVAHALENGLGVIACIGEKLDEREAGITEKVVFAQTKFIADNVKDWSKVVLAYEPVWAIGTGKTASPQQAQEVHDKLRQWLKTNVSEAVANSVRIIYGGSVTGGTCKELASQKDLDGFLVGGASLKPEFIDIINAKA.

Substrate is bound by residues Asn-11 and Lys-13. His-95 serves as the catalytic Electrophile. Glu-165 functions as the Proton acceptor in the catalytic mechanism.

This sequence belongs to the triosephosphate isomerase family. Homodimer.

Its subcellular location is the cytoplasm. The enzyme catalyses dihydroxyacetone phosphate = methylglyoxal + phosphate. It catalyses the reaction D-glyceraldehyde 3-phosphate = dihydroxyacetone phosphate. It functions in the pathway carbohydrate degradation; glycolysis; D-glyceraldehyde 3-phosphate from glycerone phosphate: step 1/1. It participates in carbohydrate biosynthesis; gluconeogenesis. Its function is as follows. Triosephosphate isomerase is an extremely efficient metabolic enzyme that catalyzes the interconversion between dihydroxyacetone phosphate (DHAP) and D-glyceraldehyde-3-phosphate (G3P) in glycolysis and gluconeogenesis. In terms of biological role, it is also responsible for the non-negligible production of methylglyoxal a reactive cytotoxic side-product that modifies and can alter proteins, DNA and lipids. This chain is Triosephosphate isomerase B (tpi1b), found in Danio rerio (Zebrafish).